We begin with the raw amino-acid sequence, 644 residues long: Threonine--tRNA ligase (644 aa).

Residues 1 to 61 (MVAITLPDGS…VADAKVEIVT (61 aa)) form the TGS domain. The segment at 242-533 (DHRKIGKALN…LIENYAGWMP (292 aa)) is catalytic. Residues cysteine 333, histidine 384, and histidine 510 each coordinate Zn(2+).

Belongs to the class-II aminoacyl-tRNA synthetase family. As to quaternary structure, homodimer. Zn(2+) serves as cofactor.

Its subcellular location is the cytoplasm. The catalysed reaction is tRNA(Thr) + L-threonine + ATP = L-threonyl-tRNA(Thr) + AMP + diphosphate + H(+). Its function is as follows. Catalyzes the attachment of threonine to tRNA(Thr) in a two-step reaction: L-threonine is first activated by ATP to form Thr-AMP and then transferred to the acceptor end of tRNA(Thr). Also edits incorrectly charged L-seryl-tRNA(Thr). The polypeptide is Threonine--tRNA ligase (Psychrobacter arcticus (strain DSM 17307 / VKM B-2377 / 273-4)).